We begin with the raw amino-acid sequence, 611 residues long: DNA-directed RNA polymerase subunit Rpo2C (611 aa).

Zn(2+) contacts are provided by Cys-547, Cys-550, Cys-565, and Cys-568.

It belongs to the RNA polymerase beta chain family. In terms of assembly, part of the RNA polymerase complex. Zn(2+) is required as a cofactor.

It localises to the cytoplasm. It catalyses the reaction RNA(n) + a ribonucleoside 5'-triphosphate = RNA(n+1) + diphosphate. DNA-dependent RNA polymerase (RNAP) catalyzes the transcription of DNA into RNA using the four ribonucleoside triphosphates as substrates. The Rpo2 subunit (Rpo2N and Rpo2C in this organism) is implicated in DNA promoter recognition and in nucleotide binding. This Methanococcus vannielii (strain ATCC 35089 / DSM 1224 / JCM 13029 / OCM 148 / SB) protein is DNA-directed RNA polymerase subunit Rpo2C.